We begin with the raw amino-acid sequence, 262 residues long: Adenosine deaminase RL5 (262 aa).

12 residues coordinate Cu cation: N36, Y40, M68, H73, C75, N114, C118, H135, C172, C175, C234, and C237.

This sequence belongs to the purine nucleoside phosphorylase YfiH/LACC1 family. In terms of assembly, homodimer. The cofactor is Cu cation.

The catalysed reaction is adenosine + phosphate = alpha-D-ribose 1-phosphate + adenine. The enzyme catalyses S-methyl-5'-thioadenosine + phosphate = 5-(methylsulfanyl)-alpha-D-ribose 1-phosphate + adenine. It catalyses the reaction inosine + phosphate = alpha-D-ribose 1-phosphate + hypoxanthine. It carries out the reaction adenosine + H2O + H(+) = inosine + NH4(+). Functionally, purine nucleoside enzyme that catalyzes the phosphorolysis of adenosine and inosine nucleosides, yielding D-ribose 1-phosphate and the respective free bases, adenine and hypoxanthine. Also catalyzes the phosphorolysis of S-methyl-5'-thioadenosine into adenine and S-methyl-5-thio-alpha-D-ribose 1-phosphate. Also has adenosine deaminase activity. Also acts as a multicopper oxidase able to oxidize a wide variety of polyphenols and related compounds in vitro. Displays substrate preference as follows: syringaldazine &gt; 2,6-dimethoxyphenol &gt; veratryl alcohol &gt; guaiacol &gt; tetramethylbenzidine &gt; 4-methoxybenzyl alcohol &gt; 2,2'-azino-bis(3-ethylbenzthiazoline-6-sulfonic acid) (ABTS) &gt;&gt; phenol red &gt; 1-hydroxybenzotriazole. Cannot use 3,4-dimetoxybenzyl alcohol and violuric acid as substrates. As this enzyme is derived from a rumen microbial community, it may have a role in the digestion of complex plant materials such as ryegrass lignin. This chain is Adenosine deaminase RL5, found in Unknown prokaryotic organism.